We begin with the raw amino-acid sequence, 567 residues long: Diacylglycerol kinase epsilon (567 aa).

A helical transmembrane segment spans residues 22-42; that stretch reads LILWTLCSVLLPVFITFWCSL. 2 Phorbol-ester/DAG-type zinc fingers span residues 59 to 108 and 124 to 177; these read KHGW…RFQC and PHHW…NEKC. Residues 215–356 enclose the DAGKc domain; that stretch reads KQWTPLIILA…LDRWKVQVTN (142 aa).

The protein belongs to the eukaryotic diacylglycerol kinase family. As to expression, expressed predominantly in testis. Expressed in endothelium, platelets and podocytes (at protein level).

The protein localises to the membrane. Its subcellular location is the cytoplasm. The enzyme catalyses a 1,2-diacyl-sn-glycerol + ATP = a 1,2-diacyl-sn-glycero-3-phosphate + ADP + H(+). It carries out the reaction 1-hexadecanoyl-2-(5Z,8Z,11Z,14Z-eicosatetraenoyl)-sn-glycerol + ATP = 1-hexadecanoyl-2-(5Z,8Z,11Z,14Z-eicosatetraenoyl)-sn-glycero-3-phosphate + ADP + H(+). The catalysed reaction is 1-octadecanoyl-2-(5Z,8Z,11Z,14Z-eicosatetraenoyl)-sn-glycerol + ATP = 1-octadecanoyl-2-(5Z,8Z,11Z,14Z-eicosatetraenoyl)-sn-glycero-3-phosphate + ADP + H(+). It catalyses the reaction 1-eicosanoyl-2-(5Z,8Z,11Z,14Z)-eicosatetraenoyl-sn-glycerol + ATP = 1-eicosanoyl-2-(5Z,8Z,11Z,14Z)-eicosatetraenoyl-sn-glycero-3-phosphate + ADP + H(+). The enzyme catalyses 1,2-di-(5Z,8Z,11Z,14Z)-eicosatetraenoyl-sn-glycerol + ATP = 1,2-di-(5Z,8Z,11Z,14Z)-eicosatetraenoyl-sn-glycero-3-phosphate + ADP + H(+). It carries out the reaction 1-octadecanoyl-2-(9Z,12Z)-octadecadienoyl-sn-glycerol + ATP = 1-octadecanoyl-2-(9Z,12Z-octadecadienoyl)-sn-glycero-3-phosphate + ADP + H(+). The catalysed reaction is 1,2-di-(9Z,12Z-octadecadienoyl)-sn-glycerol + ATP = 1,2-di-(9Z,12Z-octadecadienoyl)-sn-glycero-3-phosphate + ADP + H(+). It catalyses the reaction 1,2-di-(9Z-octadecenoyl)-sn-glycerol + ATP = 1,2-di-(9Z-octadecenoyl)-sn-glycero-3-phosphate + ADP + H(+). It participates in lipid metabolism; glycerolipid metabolism. Its activity is regulated as follows. Undergoes competitive inhibition by its own product 1,2-diacyl-sn-glycero-3-phosphate/phosphatidic acid. The strongest inhibition being observed in vitro with 1-octadecanoyl-2-(5Z,8Z,11Z,14Z-eicosatetraenoyl)-sn-glycero-3-phosphate, a major intermediate in the phosphatidylinositol turnover cycle and more generally by diacylglycerols with an arachidonoyl acyl chain at the sn-2 position. Functionally, membrane-bound diacylglycerol kinase that converts diacylglycerol/DAG into phosphatidic acid/phosphatidate/PA and regulates the respective levels of these two bioactive lipids. Thereby, acts as a central switch between the signaling pathways activated by these second messengers with different cellular targets and opposite effects in numerous biological processes. Also plays an important role in the biosynthesis of complex lipids. Displays specificity for diacylglycerol substrates with an arachidonoyl acyl chain at the sn-2 position, with the highest activity toward 1-octadecanoyl-2-(5Z,8Z,11Z,14Z-eicosatetraenoyl)-sn-glycerol the main diacylglycerol intermediate within the phosphatidylinositol turnover cycle. Can also phosphorylate diacylglycerol substrates with a linoleoyl acyl chain at the sn-2 position but much less efficiently. This is Diacylglycerol kinase epsilon (DGKE) from Homo sapiens (Human).